Consider the following 735-residue polypeptide: Catalase-peroxidase (735 aa).

The segment at 1–31 is disordered; sequence MENNTNPISGQGKCPFSGGAAKQSAGAGTRN. Low complexity predominate over residues 17 to 28; the sequence is SGGAAKQSAGAG. The tryptophyl-tyrosyl-methioninium (Trp-Tyr) (with M-252) cross-link spans 103-226; that stretch reads WHSAGTYRVA…LAAVQMGLIY (124 aa). Histidine 104 acts as the Proton acceptor in catalysis. The segment at residues 226–252 is a cross-link (tryptophyl-tyrosyl-methioninium (Tyr-Met) (with W-103)); sequence YVNPEGPNGNPDPLASARDIRETFARM. Histidine 267 provides a ligand contact to heme b. The segment at 352-371 is disordered; sequence KPKNGAGAGTVPDAHNSSKS.

It belongs to the peroxidase family. Peroxidase/catalase subfamily. In terms of assembly, homodimer or homotetramer. Requires heme b as cofactor. Post-translationally, formation of the three residue Trp-Tyr-Met cross-link is important for the catalase, but not the peroxidase activity of the enzyme.

The catalysed reaction is H2O2 + AH2 = A + 2 H2O. It carries out the reaction 2 H2O2 = O2 + 2 H2O. Bifunctional enzyme with both catalase and broad-spectrum peroxidase activity. The protein is Catalase-peroxidase of Flavobacterium psychrophilum (strain ATCC 49511 / DSM 21280 / CIP 103535 / JIP02/86).